Here is a 1170-residue protein sequence, read N- to C-terminus: MLDLNNFDRIRIGLASPDQIRAWSSGEVKKPETINYRTLKPERDGLFCERIFGPTRDWECHCGKYKRVRYKGVVCDRCGVEVTRSKVRRERLGHIELAAPVSHIWYFKGIPSRMGLLLDMSPRALEKVLYFVSYIVTDPGDTGLIKKQLLTETEYRDCRERYGNAFKASMGAEAIKKLLEEINLEELARELRQELKEVTGQRKIRAIRRLEVVEAFRKSGNRPEWMILEVIPVISPELRPMVQLDGGRFATSDLNDLYRRVINRNNRLKRLLDLGAPDIIVRNEKRMLQEAVDALIDNGRRGRPVTGPGNRPLKSLSDMLKGKQGRFRQNLLGKRVDYSGRSVIVVGPELHLHQCGLPKEMALELFKPFVMKRLVNDGYAHNIKSAKRMVERVRPEVWEVLEEVIKEHPVLLNRAPTLHRLGIQAFEPVLVEGRAIQIHPMVCTAYNADFDGDQMAVHVPLSAEAQAEARLLMLSSNNILNPKDGRPVAIPTQDMVLGIYYLTVEKQGVPGEGKAFKDPEEAVMAYYNNAVSLHAAVKVRMPGMGRIETTVGRIIFNEVIPRELGYYNQVIDKKVLSKIVDDCYRKLGFSATSKLLDGIKKLGFTFATRAGVTIGIQDITIPARKKEILKEAEQQVEKVEQQYRRGLITEEERYRKVIGIWNDATKEVTDALIETLDKFNPVYMMANSGARGNIQQIRQLAGMRGLMADPSGRIIDLPIKANFREGLTVLEYFISTHGARKGLADTALRTADSGYLTRRLVDVAQDVIVREVDCGTGQGIEVTEIKDGNEVIEKLEDRIIGRVALEDVKHPETGEILAFAGEEITESEAAKIVAAGIKKVKIRSVLTCRTRYGVCIKCYGRNLATGRQVDIGEAVGIIAAQSIGEPGTQLTMRTFHTGGVAGDDITQGLPRVEELFEARRPKGQAIIAEADGTVEVREVKGRREIEVTAEDGTKSVYQVPYGARLKVRDGDRVYAGDELTEGSVNPHDLLKIKGVQGVQIYLLQEVQRVYRLQGVDINDKHIEVMIRQMLRKVKVDEPGDTDLLPGGLIDIFEFEDENRRIKNLGGEPATAKPVLLGITKASLATDSFLSAASFQETTRVLTEAAIKGKLDLLLGLKENVIIGKLVPAGTGMSRYRNISVVAESEPGEENGEPGGERLYGMDELYGETAN.

Zn(2+) is bound by residues Cys-60, Cys-62, Cys-75, and Cys-78. Mg(2+)-binding residues include Asp-449, Asp-451, and Asp-453. 4 residues coordinate Zn(2+): Cys-774, Cys-848, Cys-855, and Cys-858. Residues 1145–1170 (EPGEENGEPGGERLYGMDELYGETAN) are disordered.

This sequence belongs to the RNA polymerase beta' chain family. In terms of assembly, the RNAP catalytic core consists of 2 alpha, 1 beta, 1 beta' and 1 omega subunit. When a sigma factor is associated with the core the holoenzyme is formed, which can initiate transcription. Mg(2+) is required as a cofactor. Requires Zn(2+) as cofactor.

The catalysed reaction is RNA(n) + a ribonucleoside 5'-triphosphate = RNA(n+1) + diphosphate. Functionally, DNA-dependent RNA polymerase catalyzes the transcription of DNA into RNA using the four ribonucleoside triphosphates as substrates. The polypeptide is DNA-directed RNA polymerase subunit beta' (Pelotomaculum thermopropionicum (strain DSM 13744 / JCM 10971 / SI)).